A 556-amino-acid chain; its full sequence is Formate--tetrahydrofolate ligase 1 (556 aa).

An ATP-binding site is contributed by 65 to 72; it reads TPAGEGKS.

This sequence belongs to the formate--tetrahydrofolate ligase family.

It catalyses the reaction (6S)-5,6,7,8-tetrahydrofolate + formate + ATP = (6R)-10-formyltetrahydrofolate + ADP + phosphate. It participates in one-carbon metabolism; tetrahydrofolate interconversion. In Streptococcus pyogenes serotype M4 (strain MGAS10750), this protein is Formate--tetrahydrofolate ligase 1.